We begin with the raw amino-acid sequence, 159 residues long: MARFPITIKGFHKLEQELKHLKYVERLKITTDISTAREFGDLSENAEYKAAKERQLLNDKKIYDLENKLANAEVIEITKINSNSVKFGARVVLLDRDTEKEVVYQIVGEYEADITQNLISIASPIAQALIGKKAGDIIEVITPKGGRFYELLKVQYVDF.

Belongs to the GreA/GreB family.

In terms of biological role, necessary for efficient RNA polymerase transcription elongation past template-encoded arresting sites. The arresting sites in DNA have the property of trapping a certain fraction of elongating RNA polymerases that pass through, resulting in locked ternary complexes. Cleavage of the nascent transcript by cleavage factors such as GreA or GreB allows the resumption of elongation from the new 3'terminus. GreA releases sequences of 2 to 3 nucleotides. This is Transcription elongation factor GreA from Orientia tsutsugamushi (strain Ikeda) (Rickettsia tsutsugamushi).